Reading from the N-terminus, the 116-residue chain is MNDRITLAQAHCQPREKKEHKLGQARLAELLTQVPGWELSNNGHALTRTFQFDNYYRTLAFVNALAFIAHCEDHHPDMNVHYGRAVVCFSTHKIGGISEIDFICAAKTSALYEQGI.

The protein belongs to the pterin-4-alpha-carbinolamine dehydratase family.

The catalysed reaction is (4aS,6R)-4a-hydroxy-L-erythro-5,6,7,8-tetrahydrobiopterin = (6R)-L-erythro-6,7-dihydrobiopterin + H2O. In Xylella fastidiosa (strain M23), this protein is Putative pterin-4-alpha-carbinolamine dehydratase.